A 225-amino-acid chain; its full sequence is Urease accessory protein UreE (225 aa).

Over residues 171–215 (HHGHEHSHDHEHGHSHAAHEHSHGHDHTHGHDHDHGDHVHDESCG) the composition is skewed to basic and acidic residues. The segment at 171–225 (HHGHEHSHDHEHGHSHAAHEHSHGHDHTHGHDHDHGDHVHDESCGHGHHHHHAHR) is disordered. A compositionally biased stretch (basic residues) spans 216–225 (HGHHHHHAHR).

Belongs to the UreE family.

Its subcellular location is the cytoplasm. Functionally, involved in urease metallocenter assembly. Binds nickel. Probably functions as a nickel donor during metallocenter assembly. The sequence is that of Urease accessory protein UreE from Paraburkholderia xenovorans (strain LB400).